The sequence spans 581 residues: ATP-dependent RNA helicase DBP3 (581 aa).

Residues 1-118 (MAATKHSLAD…ASSNSEAPSS (118 aa)) are disordered. Basic and acidic residues-rich tracts occupy residues 7 to 35 (SLAD…EKRE) and 53 to 62 (DADRAAEKER). The segment covering 63 to 73 (KKAKKAKKLEK) has biased composition (basic residues). Low complexity-rich tracts occupy residues 80-89 (AEASAEPAAE) and 106-118 (TTEA…APSS). A Q motif motif is present at residues 160-189 (LEFHQLPATNLLEKKPSPFANYKAPTPIQS). Residues 192–365 (WPFTLSGRDV…ATFMVSPVKI (174 aa)) enclose the Helicase ATP-binding domain. 205–212 (AETGSGKT) contributes to the ATP binding site. The DEAD box motif lies at 311 to 314 (DEAD). One can recognise a Helicase C-terminal domain in the interval 402-551 (RLLEVLKEHQ…PVPEDLLKFG (150 aa)).

It belongs to the DEAD box helicase family. DDX5/DBP2 subfamily.

Its subcellular location is the nucleus. The protein resides in the nucleolus. The catalysed reaction is ATP + H2O = ADP + phosphate + H(+). In terms of biological role, ATP-dependent RNA helicase required for 60S ribosomal subunit synthesis. Involved in efficient pre-rRNA processing, predominantly at site A3, which is necessary for the normal formation of 25S and 5.8S rRNAs. The chain is ATP-dependent RNA helicase DBP3 (DBP3) from Gibberella zeae (strain ATCC MYA-4620 / CBS 123657 / FGSC 9075 / NRRL 31084 / PH-1) (Wheat head blight fungus).